The chain runs to 333 residues: MQLLKDKFGRVHDYIRISVTDRCNLRCVYCMPEEGLTFLPHEKVLSKDEIVSFMELMVKFGIKKVRITGGEPLLRTDIVEIVRGLGAIPEIEDISITTNAMYLAKKAEALKDAGLTRVNISLDSLHADRFKAITRGGRLQKVLDGIQKAEEVGLFPIKLNVVLIKGQNDDEITDFLRFTKDKDINIRFIEYMPIGHAGTSWKEKYLPLDTIFEACNEAGYEYEPVDSIRGNGPSENFRIKGAKGTFGVIHPVSAHFCDSCNRLRLTADGYIKACLYWDEEMNIRPFIQDPVKLMQLVQKAIDNKPENHEMALKLQDEVQSNKPTWRRMSQIGG.

One can recognise a Radical SAM core domain in the interval 7–221 (KFGRVHDYIR…FEACNEAGYE (215 aa)). Residue arginine 16 participates in GTP binding. Positions 23 and 27 each coordinate [4Fe-4S] cluster. Residue tyrosine 29 participates in S-adenosyl-L-methionine binding. Cysteine 30 contributes to the [4Fe-4S] cluster binding site. Residue arginine 66 coordinates GTP. Glycine 70 provides a ligand contact to S-adenosyl-L-methionine. Position 97 (threonine 97) interacts with GTP. Serine 121 contacts S-adenosyl-L-methionine. Lysine 158 is a binding site for GTP. Residue methionine 192 coordinates S-adenosyl-L-methionine. Positions 257 and 260 each coordinate [4Fe-4S] cluster. 262–264 (RLR) provides a ligand contact to GTP. Residue cysteine 274 participates in [4Fe-4S] cluster binding.

This sequence belongs to the radical SAM superfamily. MoaA family. Monomer and homodimer. Requires [4Fe-4S] cluster as cofactor.

It carries out the reaction GTP + AH2 + S-adenosyl-L-methionine = (8S)-3',8-cyclo-7,8-dihydroguanosine 5'-triphosphate + 5'-deoxyadenosine + L-methionine + A + H(+). The protein operates within cofactor biosynthesis; molybdopterin biosynthesis. Its function is as follows. Catalyzes the cyclization of GTP to (8S)-3',8-cyclo-7,8-dihydroguanosine 5'-triphosphate. This is GTP 3',8-cyclase from Listeria monocytogenes serotype 4b (strain CLIP80459).